Consider the following 32-residue polypeptide: U3-ctenitoxin-Pk1a (32 aa).

3 disulfide bridges follow: C3–C17, C10–C21, and C16–C30.

The protein belongs to the neurotoxin 17 (21C2) family. Expressed by the venom gland.

Its subcellular location is the secreted. May act as a neurotoxin. The protein is U3-ctenitoxin-Pk1a of Phoneutria keyserlingi (Brazilian wandering spider).